Reading from the N-terminus, the 248-residue chain is N-acylneuraminate-9-phosphatase (248 aa).

Asp12 provides a ligand contact to Mg(2+). Residues Leu13, Asp14, Thr131, Asn132, and Lys164 each coordinate phosphate. Residue Asp14 participates in Mg(2+) binding. Asp189 provides a ligand contact to Mg(2+).

It belongs to the HAD-like hydrolase superfamily. NANP family. Mg(2+) is required as a cofactor.

The catalysed reaction is N-acetylneuraminate 9-phosphate + H2O = N-acetylneuraminate + phosphate. It carries out the reaction N-glycoloylneuraminate 9-phosphate + H2O = N-glycoloylneuraminate + phosphate. It functions in the pathway amino-sugar metabolism; N-acetylneuraminate biosynthesis. With respect to regulation, inhibited by calcium. Inhibited by vanadate, sodium orthovanadate and phosphonate. Functionally, catalyzes the dephosphorylation of N-acylneuraminate 9-phosphate (Neu5Ac-9-P) to N-acetylneuraminic acid (Neu5Ac or sialic acid). Can also use N-glycoloylneuraminate 9-phosphate as substrate. This chain is N-acylneuraminate-9-phosphatase, found in Homo sapiens (Human).